The chain runs to 300 residues: tRNA-cytidine(32) 2-sulfurtransferase (300 aa).

The PP-loop motif signature appears at 57–62 (SGGKDS). Residues C132, C135, and C223 each coordinate [4Fe-4S] cluster.

This sequence belongs to the TtcA family. As to quaternary structure, homodimer. It depends on Mg(2+) as a cofactor. The cofactor is [4Fe-4S] cluster.

Its subcellular location is the cytoplasm. The enzyme catalyses cytidine(32) in tRNA + S-sulfanyl-L-cysteinyl-[cysteine desulfurase] + AH2 + ATP = 2-thiocytidine(32) in tRNA + L-cysteinyl-[cysteine desulfurase] + A + AMP + diphosphate + H(+). It functions in the pathway tRNA modification. Functionally, catalyzes the ATP-dependent 2-thiolation of cytidine in position 32 of tRNA, to form 2-thiocytidine (s(2)C32). The sulfur atoms are provided by the cysteine/cysteine desulfurase (IscS) system. This is tRNA-cytidine(32) 2-sulfurtransferase from Xanthomonas campestris pv. campestris (strain 8004).